A 25-amino-acid chain; its full sequence is Chaperonin GroEL (25 aa).

This sequence belongs to the chaperonin (HSP60) family. As to quaternary structure, forms a cylinder of 14 subunits composed of two heptameric rings stacked back-to-back. Interacts with the co-chaperonin GroES.

The protein localises to the cytoplasm. It catalyses the reaction ATP + H2O + a folded polypeptide = ADP + phosphate + an unfolded polypeptide.. Its function is as follows. Together with its co-chaperonin GroES, plays an essential role in assisting protein folding. The GroEL-GroES system forms a nano-cage that allows encapsulation of the non-native substrate proteins and provides a physical environment optimized to promote and accelerate protein folding. In Delftia acidovorans (Pseudomonas acidovorans), this protein is Chaperonin GroEL.